Here is a 557-residue protein sequence, read N- to C-terminus: MDLTKEEILPYGHHVAKLDYRKILDRCADRPDGKYIDVTAITPTPLGEGKSTSVMGLVQGLGKRDKSVVGAIRQPSGGPTMNIKGSAAGGGRSQCIPLNEFSLGLTGDINSIMNAHNLGMVALTARMQHEANYTDAQLAQRNLKRLDIHPKKIQFSWIIDFCAQALRNITIGIGGKMDGPTIQSSFAIAVSSELMAILAIANDLADMRARIAKVVVAYDKQDRPITTADLEVDGAMTAWMVQAINPNLMQTLEGQPVLVHAGPFANIAIGQSSVIADRVGLKIAGYNVTESGFGADIGFEKFWNLKCRFSGNKPNCAVIVATIRALKCHGGAPIPVPGKPMPEEYAKENVGWVEEGCKNLLHHINTVKKAGINPVVCINAFYTDRPNEIKAVKRICEHAGARVAVSTHWEHGGDGALEFADAVIDACEEKNDFKFLYELDTPLEKRIELIAKEVYGADGVSYTPEARTKLTQLAKDPEMAELGTCMVKTHLSLSHDPKLKGVPKGWTLPIRDILTYKGAGFVVPVAGAISLMPGTGSDPAYRRVDVDLQTGRVKGVF.

Residue 44–51 (TPLGEGKS) coordinates ATP.

The protein belongs to the formate--tetrahydrofolate ligase family.

It carries out the reaction (6S)-5,6,7,8-tetrahydrofolate + formate + ATP = (6R)-10-formyltetrahydrofolate + ADP + phosphate. Its pathway is one-carbon metabolism; tetrahydrofolate interconversion. This chain is Formate--tetrahydrofolate ligase, found in Desulfotalea psychrophila (strain LSv54 / DSM 12343).